The following is a 464-amino-acid chain: F-box/WD repeat-containing protein 12 (464 aa).

The region spanning 1–45 (MEIRLPDLALKRIFSFLDLFGLLQVSQVNKHWNRIADSDYLWRSL) is the F-box domain. WD repeat units follow at residues 89–132 (YKVT…CAWD), 136–174 (GTMIWSSPVQEFHFSNLVTLPQMHLAITMDRKKTIKVWN), 178–217 (RDALAVLPMPQPCYCMEAYLTKDGPFLMVGDAAGDIYTFT), 222–263 (RDVS…FLTE), 270–315 (EGSV…ITFD), 320–367 (KTGG…LLFS), 370–407 (GFLLQRFEDHQAAINNFWVDPCYVLTTSENSVHVYMWE), and 416–461 (RSCC…VMYS).

As to quaternary structure, interacts with SKP1. Interacts with CUL1. Interacts with IL22RA1. In terms of tissue distribution, ubiquitously expressed.

It functions in the pathway protein modification; protein ubiquitination. Its function is as follows. Substrate-recognition component of the SCF (SKP1-CUL1-F-box protein)-type E3 ubiquitin ligase complex. Promotes degradation of interleukin-22 receptor subunit IL22RA1 in resting and IL22-stimulated conditions by facilitating its ubiquitination. Functions as a cell growth suppressor. The chain is F-box/WD repeat-containing protein 12 (FBXW12) from Homo sapiens (Human).